Consider the following 233-residue polypeptide: ATP-dependent dethiobiotin synthetase BioD (233 aa).

Residue Glu12–Tyr17 participates in ATP binding. Thr16 is a binding site for Mg(2+). Lys37 is a catalytic residue. ATP is bound by residues Asp54, Glu120–Gly123, and Asn186–Asp187. Mg(2+) contacts are provided by Asp54 and Glu120.

Belongs to the dethiobiotin synthetase family. As to quaternary structure, homodimer. Mg(2+) is required as a cofactor.

Its subcellular location is the cytoplasm. The enzyme catalyses (7R,8S)-7,8-diammoniononanoate + CO2 + ATP = (4R,5S)-dethiobiotin + ADP + phosphate + 3 H(+). It functions in the pathway cofactor biosynthesis; biotin biosynthesis; biotin from 7,8-diaminononanoate: step 1/2. In terms of biological role, catalyzes a mechanistically unusual reaction, the ATP-dependent insertion of CO2 between the N7 and N8 nitrogen atoms of 7,8-diaminopelargonic acid (DAPA, also called 7,8-diammoniononanoate) to form a ureido ring. The protein is ATP-dependent dethiobiotin synthetase BioD of Alteromonas mediterranea (strain DSM 17117 / CIP 110805 / LMG 28347 / Deep ecotype).